Reading from the N-terminus, the 140-residue chain is Large ribosomal subunit protein uL13 (140 aa).

This sequence belongs to the universal ribosomal protein uL13 family. Part of the 50S ribosomal subunit.

This protein is one of the early assembly proteins of the 50S ribosomal subunit, although it is not seen to bind rRNA by itself. It is important during the early stages of 50S assembly. The protein is Large ribosomal subunit protein uL13 of Nautilia profundicola (strain ATCC BAA-1463 / DSM 18972 / AmH).